The chain runs to 152 residues: Endoribonuclease YbeY (152 aa).

The Zn(2+) site is built by His-117, His-121, and His-127.

This sequence belongs to the endoribonuclease YbeY family. It depends on Zn(2+) as a cofactor.

The protein localises to the cytoplasm. Single strand-specific metallo-endoribonuclease involved in late-stage 70S ribosome quality control and in maturation of the 3' terminus of the 16S rRNA. The polypeptide is Endoribonuclease YbeY (Sulfurihydrogenibium sp. (strain YO3AOP1)).